The following is a 474-amino-acid chain: Adenosylhomocysteinase (474 aa).

The substrate site is built by threonine 61, aspartate 136, and glutamate 196. NAD(+) is bound at residue 197 to 199 (TTT). Substrate-binding residues include lysine 226 and aspartate 230. NAD(+) is bound by residues asparagine 231, 260-265 (GYGDVG), glutamate 283, asparagine 318, 339-341 (IGH), and asparagine 384.

Belongs to the adenosylhomocysteinase family. The cofactor is NAD(+).

It is found in the cytoplasm. The catalysed reaction is S-adenosyl-L-homocysteine + H2O = L-homocysteine + adenosine. The protein operates within amino-acid biosynthesis; L-homocysteine biosynthesis; L-homocysteine from S-adenosyl-L-homocysteine: step 1/1. Functionally, may play a key role in the regulation of the intracellular concentration of adenosylhomocysteine. The protein is Adenosylhomocysteinase of Ralstonia nicotianae (strain ATCC BAA-1114 / GMI1000) (Ralstonia solanacearum).